The following is a 740-amino-acid chain: N-acetylated-alpha-linked acidic dipeptidase 2 (740 aa).

Residues 1–7 lie on the Cytoplasmic side of the membrane; the sequence is MARPRHL. A helical; Signal-anchor for type II membrane protein transmembrane segment spans residues 8–31; sequence RGLGMCITAVLASFIAGFTVGWFI. Residues 32–740 are Extracellular-facing; that stretch reads KPLKETTTSA…AAAGTLTNVL (709 aa). 3 N-linked (GlcNAc...) asparagine glycosylation sites follow: Asn111, Asn143, and Asn185. Residues Arg200 and Asn247 each coordinate substrate. Residues Thr259 and Tyr262 each contribute to the Ca(2+) site. Residues 264 to 577 form an NAALADase region; sequence AKEYTFRLPV…QLRGALVYEL (314 aa). Asn314 carries N-linked (GlcNAc...) asparagine glycosylation. Positions 367 and 377 each coordinate Zn(2+). Position 414 (Glu414) interacts with substrate. Glu414 acts as the Nucleophile; for NAALADase activity in catalysis. Glu415 lines the Zn(2+) pocket. 2 residues coordinate Ca(2+): Glu423 and Glu426. Asp443 is a Zn(2+) binding site. Asn449 is a glycosylation site (N-linked (GlcNAc...) asparagine). Residues 507–508, 524–526, Tyr542, and 542–543 contribute to the substrate site; these read SG, RAR, and YH. His543 is a binding site for Zn(2+). An N-linked (GlcNAc...) asparagine glycan is attached at Asn603. Ser618 functions as the Charge relay system in the catalytic mechanism. N-linked (GlcNAc...) asparagine glycosylation is present at Asn628. Catalysis depends on charge relay system residues Asp656 and His679. Substrate is bound at residue 689 to 690; it reads KY.

The protein belongs to the peptidase M28 family. M28B subfamily. In terms of assembly, homodimer. Zn(2+) is required as a cofactor. Expressed ovary, testes and lung, but not brain.

It localises to the cell membrane. The catalysed reaction is Release of an unsubstituted, C-terminal glutamyl residue, typically from Ac-Asp-Glu or folylpoly-gamma-glutamates.. Functionally, has N-acetylated-alpha-linked-acidic dipeptidase (NAALADase) activity. Also exhibits a dipeptidyl-peptidase IV type activity. Inactivates the peptide neurotransmitter N-acetylaspartylglutamate. The polypeptide is N-acetylated-alpha-linked acidic dipeptidase 2 (Naalad2) (Mus musculus (Mouse)).